We begin with the raw amino-acid sequence, 207 residues long: Thiamine-phosphate synthase (207 aa).

4-amino-2-methyl-5-(diphosphooxymethyl)pyrimidine contacts are provided by residues 36–40 and Asp68; that span reads QMRIK. The Mg(2+) site is built by Asp69 and Asp88. Ser106 lines the 4-amino-2-methyl-5-(diphosphooxymethyl)pyrimidine pocket. Residue 132 to 134 participates in 2-[(2R,5Z)-2-carboxy-4-methylthiazol-5(2H)-ylidene]ethyl phosphate binding; sequence TKT. Lys135 serves as a coordination point for 4-amino-2-methyl-5-(diphosphooxymethyl)pyrimidine. 2-[(2R,5Z)-2-carboxy-4-methylthiazol-5(2H)-ylidene]ethyl phosphate is bound by residues Gly162 and 182 to 183; that span reads IS.

It belongs to the thiamine-phosphate synthase family. It depends on Mg(2+) as a cofactor.

It carries out the reaction 2-[(2R,5Z)-2-carboxy-4-methylthiazol-5(2H)-ylidene]ethyl phosphate + 4-amino-2-methyl-5-(diphosphooxymethyl)pyrimidine + 2 H(+) = thiamine phosphate + CO2 + diphosphate. The catalysed reaction is 2-(2-carboxy-4-methylthiazol-5-yl)ethyl phosphate + 4-amino-2-methyl-5-(diphosphooxymethyl)pyrimidine + 2 H(+) = thiamine phosphate + CO2 + diphosphate. It catalyses the reaction 4-methyl-5-(2-phosphooxyethyl)-thiazole + 4-amino-2-methyl-5-(diphosphooxymethyl)pyrimidine + H(+) = thiamine phosphate + diphosphate. It functions in the pathway cofactor biosynthesis; thiamine diphosphate biosynthesis; thiamine phosphate from 4-amino-2-methyl-5-diphosphomethylpyrimidine and 4-methyl-5-(2-phosphoethyl)-thiazole: step 1/1. Condenses 4-methyl-5-(beta-hydroxyethyl)thiazole monophosphate (THZ-P) and 2-methyl-4-amino-5-hydroxymethyl pyrimidine pyrophosphate (HMP-PP) to form thiamine monophosphate (TMP). This Pyrococcus furiosus (strain ATCC 43587 / DSM 3638 / JCM 8422 / Vc1) protein is Thiamine-phosphate synthase.